The primary structure comprises 258 residues: Imidazole glycerol phosphate synthase subunit HisF (258 aa).

Residues Asp-11 and Asp-130 contribute to the active site.

This sequence belongs to the HisA/HisF family. In terms of assembly, heterodimer of HisH and HisF.

The protein resides in the cytoplasm. The catalysed reaction is 5-[(5-phospho-1-deoxy-D-ribulos-1-ylimino)methylamino]-1-(5-phospho-beta-D-ribosyl)imidazole-4-carboxamide + L-glutamine = D-erythro-1-(imidazol-4-yl)glycerol 3-phosphate + 5-amino-1-(5-phospho-beta-D-ribosyl)imidazole-4-carboxamide + L-glutamate + H(+). Its pathway is amino-acid biosynthesis; L-histidine biosynthesis; L-histidine from 5-phospho-alpha-D-ribose 1-diphosphate: step 5/9. Its function is as follows. IGPS catalyzes the conversion of PRFAR and glutamine to IGP, AICAR and glutamate. The HisF subunit catalyzes the cyclization activity that produces IGP and AICAR from PRFAR using the ammonia provided by the HisH subunit. The chain is Imidazole glycerol phosphate synthase subunit HisF from Methylobacterium sp. (strain 4-46).